Consider the following 214-residue polypeptide: Probable transaldolase (214 aa).

The active-site Schiff-base intermediate with substrate is Lys83.

Belongs to the transaldolase family. Type 3B subfamily.

It is found in the cytoplasm. It catalyses the reaction D-sedoheptulose 7-phosphate + D-glyceraldehyde 3-phosphate = D-erythrose 4-phosphate + beta-D-fructose 6-phosphate. It functions in the pathway carbohydrate degradation; pentose phosphate pathway; D-glyceraldehyde 3-phosphate and beta-D-fructose 6-phosphate from D-ribose 5-phosphate and D-xylulose 5-phosphate (non-oxidative stage): step 2/3. Functionally, transaldolase is important for the balance of metabolites in the pentose-phosphate pathway. The protein is Probable transaldolase of Geotalea daltonii (strain DSM 22248 / JCM 15807 / FRC-32) (Geobacter daltonii).